Consider the following 784-residue polypeptide: Probable leucine-rich repeat receptor-like protein kinase IMK3 (784 aa).

The N-terminal stretch at 1–48 (MEFITQNQAITSLSMINTDIDQPKASLRSRFLLHLIICLLFFVPPCSS) is a signal peptide. Residues 49 to 409 (QAWDGVVITQ…PSHRNLSTKD (361 aa)) are Extracellular-facing. Asparagine 82 carries N-linked (GlcNAc...) asparagine glycosylation. LRR repeat units lie at residues 126–148 (ALRK…LGLI), 150–172 (NLRG…LGVS), 174–197 (FLQT…ADSS), 198–220 (KLLR…LSRS), 222–242 (SLQF…DTWG), 247–268 (NLRV…SLCN), 271–294 (QLQD…SKLT), 295–317 (KLRK…LGNI), 319–342 (SLIH…SDLE), and 343–365 (SLNF…LSQK). Residues asparagine 203, asparagine 232, and asparagine 268 are each glycosylated (N-linked (GlcNAc...) asparagine). An N-linked (GlcNAc...) asparagine glycan is attached at asparagine 316. N-linked (GlcNAc...) asparagine glycans are attached at residues asparagine 348, asparagine 353, asparagine 367, and asparagine 404. The chain crosses the membrane as a helical span at residues 410 to 430 (IILIASGALLIVMLILVCVLC). Over 431-784 (CLLRKKANET…VPEASASTSQ (354 aa)) the chain is Cytoplasmic. The disordered stretch occupies residues 441-467 (KAKGGEAGPGAVAAKTEKGGEAEAGGE). Residues 488 to 773 (CATAEIMGKS…TTATTSEPLI (286 aa)) form the Protein kinase domain. Residues 494–502 (MGKSTYGTV) and lysine 516 each bind ATP. Positions 760–784 (RPEETTATTSEPLIDVPEASASTSQ) are disordered.

Belongs to the protein kinase superfamily. Ser/Thr protein kinase family. Interacts with AGL24. Autophosphorylated. As to expression, expressed in meristems, including roots, vegetative, inflorescence and floral meristems, and in embryos.

The protein resides in the cell membrane. It carries out the reaction L-seryl-[protein] + ATP = O-phospho-L-seryl-[protein] + ADP + H(+). The catalysed reaction is L-threonyl-[protein] + ATP = O-phospho-L-threonyl-[protein] + ADP + H(+). In terms of biological role, can phosphorylate AGL24. The chain is Probable leucine-rich repeat receptor-like protein kinase IMK3 (IMK3) from Arabidopsis thaliana (Mouse-ear cress).